We begin with the raw amino-acid sequence, 428 residues long: Adenylosuccinate synthetase (428 aa).

GTP is bound by residues 12-18 and 40-42; these read GDEGKGK and GHT. The Proton acceptor role is filled by Asp13. Mg(2+) contacts are provided by Asp13 and Gly40. IMP-binding positions include 13–16, 38–41, Thr129, Arg143, Gln224, Thr239, and Arg303; these read DEGK and NAGH. His41 (proton donor) is an active-site residue. Residue 299–305 participates in substrate binding; sequence VTTGRSR. Residues Arg305, 331-333, and 413-415 each bind GTP; these read KLD and GVG.

This sequence belongs to the adenylosuccinate synthetase family. Homodimer. Mg(2+) serves as cofactor.

It localises to the cytoplasm. It catalyses the reaction IMP + L-aspartate + GTP = N(6)-(1,2-dicarboxyethyl)-AMP + GDP + phosphate + 2 H(+). It functions in the pathway purine metabolism; AMP biosynthesis via de novo pathway; AMP from IMP: step 1/2. In terms of biological role, plays an important role in the de novo pathway of purine nucleotide biosynthesis. Catalyzes the first committed step in the biosynthesis of AMP from IMP. The protein is Adenylosuccinate synthetase of Saccharopolyspora erythraea (strain ATCC 11635 / DSM 40517 / JCM 4748 / NBRC 13426 / NCIMB 8594 / NRRL 2338).